The following is a 324-amino-acid chain: NADH-cytochrome b5 reductase 1 (324 aa).

A helical membrane pass occupies residues 49–69 (LNIVLAFVVGLIGSVVVLLYF). The FAD-binding FR-type domain occupies 81 to 184 (TQWQQYRLME…KGPKGQMRYA (104 aa)). FAD is bound by residues 164–179 (GSMK…GPKG) and 190–222 (HIGM…QIDF).

Belongs to the flavoprotein pyridine nucleotide cytochrome reductase family. In terms of assembly, monomer. Component of the 2-(3-amino-3-carboxypropyl)histidine synthase complex composed of DPH1, DPH2, DPH3 and a NADH-dependent reductase, predominantly CBR1. Requires FAD as cofactor.

It localises to the mitochondrion outer membrane. It catalyses the reaction 2 Fe(III)-[cytochrome b5] + NADH = 2 Fe(II)-[cytochrome b5] + NAD(+) + H(+). It carries out the reaction 2 Fe(3+)-[Dph3] + NADH = 2 Fe(2+)-[Dph3] + NAD(+) + H(+). Its pathway is protein modification; peptidyl-diphthamide biosynthesis. In terms of biological role, NADH-dependent reductase for DPH3 and cytochrome b5. Required for the first step of diphthamide biosynthesis, a post-translational modification of histidine which occurs in elongation factor 2. DPH1 and DPH2 transfer a 3-amino-3-carboxypropyl (ACP) group from S-adenosyl-L-methionine (SAM) to a histidine residue, the reaction is assisted by a reduction system comprising DPH3 and a NADH-dependent reductase, predominantly CBR1. By reducing DPH3, also involved in the formation of the tRNA wobble base modification mcm5s 2U (5-methoxycarbonylmethyl-2-thiouridine), mediated by the elongator complex. The cytochrome b5/NADH cytochrome b5 reductase electron transfer system supports the catalytic activity of several sterol biosynthetic enzymes. This is NADH-cytochrome b5 reductase 1 (CBR1) from Mycosarcoma maydis (Corn smut fungus).